A 943-amino-acid polypeptide reads, in one-letter code: Netrin receptor UNC5B-a (943 aa).

Positions 1 to 30 (MYLSRNPSGAALAAILVALILSCNFPSSTA) are cleaved as a signal peptide. The Extracellular portion of the chain corresponds to 31–380 (GIEYSDVLPD…LESTGDVALY (350 aa)). An Ig-like domain is found at 51-148 (PHFLLEPEDA…AGTTKSKRSY (98 aa)). Disulfide bonds link cysteine 72–cysteine 133, cysteine 84–cysteine 131, cysteine 177–cysteine 228, cysteine 261–cysteine 298, cysteine 265–cysteine 302, cysteine 276–cysteine 288, cysteine 317–cysteine 351, cysteine 321–cysteine 356, and cysteine 329–cysteine 341. An Ig-like C2-type domain is found at 150–245 (RIAYLRKNFD…KRRSTTATVI (96 aa)). The N-linked (GlcNAc...) asparagine glycan is linked to asparagine 225. 2 consecutive TSP type-1 domains span residues 249-303 (NGGW…TMCP) and 305-357 (DGGW…GLCM). Asparagine 350 carries an N-linked (GlcNAc...) asparagine glycan. A helical transmembrane segment spans residues 381–401 (AGLVVAIFIVIILLMAVGIVV). The Cytoplasmic portion of the chain corresponds to 402–943 (YRRNCREFDT…MLVMATDGDC (542 aa)). The ZU5 domain occupies 542-685 (NSVTGTFGSL…LGTYAFVGES (144 aa)). The UPA domain stretch occupies residues 688 to 836 (RSAIKRLQLA…LEENVKSFDP (149 aa)). The region spanning 863-941 (KICNSLDAPN…EMMLVMATDG (79 aa)) is the Death domain.

The protein belongs to the unc-5 family. As to quaternary structure, interacts (via extracellular domain) with flrt3 (via extracellular domain). Interacts with rnd1. Phosphorylated on cytoplasmic tyrosine residues. As to expression, in the developing visual system, it is expressed within the developing optic vesicles and later become restricted to the dorsal ciliary marginal zone, a site of retinoblast proliferation and differentiation.

Its subcellular location is the cell membrane. Its function is as follows. Plays a role in cell-cell adhesion during embryonic development. Receptor for netrin required for axon guidance. Mediates axon repulsion of neuronal growth cones in the developing nervous system upon ligand binding. This is Netrin receptor UNC5B-a (unc5b-a) from Xenopus laevis (African clawed frog).